Reading from the N-terminus, the 306-residue chain is Tyrosine recombinase EUBREC_2677 (306 aa).

Positions Asn-2 to Glu-84 constitute a Core-binding (CB) domain. Residues Ile-106–Ile-296 enclose the Tyr recombinase domain. Active-site residues include Arg-155, Lys-179, His-248, Arg-251, and His-274. The O-(3'-phospho-DNA)-tyrosine intermediate role is filled by Tyr-283.

It belongs to the 'phage' integrase family.

It is found in the cytoplasm. Site-specific tyrosine recombinase, which acts by catalyzing the cutting and rejoining of the recombining DNA molecules. This Agathobacter rectalis (strain ATCC 33656 / DSM 3377 / JCM 17463 / KCTC 5835 / VPI 0990) (Eubacterium rectale) protein is Tyrosine recombinase EUBREC_2677.